The sequence spans 288 residues: Diaminopimelate epimerase (288 aa).

3 residues coordinate substrate: Asn13, Gln46, and Asn66. Cys75 acts as the Proton donor in catalysis. Residues 76–77 (GN), Asn166, Asn199, and 217–218 (ER) each bind substrate. Cys226 acts as the Proton acceptor in catalysis. 227 to 228 (GT) contributes to the substrate binding site.

This sequence belongs to the diaminopimelate epimerase family. As to quaternary structure, homodimer.

The protein localises to the cytoplasm. The enzyme catalyses (2S,6S)-2,6-diaminopimelate = meso-2,6-diaminopimelate. The protein operates within amino-acid biosynthesis; L-lysine biosynthesis via DAP pathway; DL-2,6-diaminopimelate from LL-2,6-diaminopimelate: step 1/1. Its function is as follows. Catalyzes the stereoinversion of LL-2,6-diaminopimelate (L,L-DAP) to meso-diaminopimelate (meso-DAP), a precursor of L-lysine and an essential component of the bacterial peptidoglycan. This chain is Diaminopimelate epimerase, found in Cupriavidus pinatubonensis (strain JMP 134 / LMG 1197) (Cupriavidus necator (strain JMP 134)).